The sequence spans 300 residues: ADP-ribosyl cyclase/cyclic ADP-ribose hydrolase 1 (300 aa).

Residues 1-21 (MANCEFSPVSGDKPCCRLSRR) are Cytoplasmic-facing. Residues 22–42 (AQLCLGVSILVLILVVVLAVV) form a helical; Signal-anchor for type II membrane protein membrane-spanning segment. Topologically, residues 43–300 (VPRWRQQWSG…PEDSSCTSEI (258 aa)) are extracellular. Cystine bridges form between cysteine 67-cysteine 82, cysteine 99-cysteine 180, and cysteine 160-cysteine 173. Asparagine 100 is a glycosylation site (N-linked (GlcNAc...) asparagine). Cysteine 119 is an active-site residue. Residue asparagine 164 is glycosylated (N-linked (GlcNAc...) asparagine). Residue cysteine 201 is part of the active site. Asparagine 209 and asparagine 219 each carry an N-linked (GlcNAc...) asparagine glycan. Disulfide bonds link cysteine 254-cysteine 275 and cysteine 287-cysteine 296.

Belongs to the ADP-ribosyl cyclase family. Homodimer. In terms of tissue distribution, expressed at high levels in pancreas, liver, kidney, brain, testis, ovary, placenta, malignant lymphoma and neuroblastoma.

Its subcellular location is the cell surface. It is found in the membrane. The catalysed reaction is 2'-phospho-cyclic ADP-ribose + nicotinate = nicotinate-adenine dinucleotide phosphate. It carries out the reaction NAD(+) = cyclic ADP-beta-D-ribose + nicotinamide + H(+). The enzyme catalyses NAD(+) + H2O = ADP-D-ribose + nicotinamide + H(+). It catalyses the reaction cyclic ADP-beta-D-ribose + H2O = ADP-D-ribose. The catalysed reaction is NADP(+) = 2'-phospho-cyclic ADP-ribose + nicotinamide. It carries out the reaction nicotinate + NADP(+) = nicotinate-adenine dinucleotide phosphate + nicotinamide. ATP inhibits the cADPR hydrolyzing activity. In terms of biological role, synthesizes cyclic ADP-ribose (cADPR), a second messenger for glucose-induced insulin secretion. Synthesizes the Ca(2+) mobilizer nicotinate-adenine dinucleotide phosphate, NAADP(+), from 2'-phospho-cADPR and nicotinic acid, as well as from NADP(+) and nicotinic acid. At both pH 5.0 and pH 7.4 preferentially transforms 2'-phospho-cADPR into NAADP(+), while preferentially cleaving NADP(+) to cADPR and ADPRP rather than into NADDP(+). Has cADPR hydrolase activity. The protein is ADP-ribosyl cyclase/cyclic ADP-ribose hydrolase 1 (CD38) of Homo sapiens (Human).